The following is a 528-amino-acid chain: Abrin-d (528 aa).

A Pyrrolidone carboxylic acid modification is found at glutamine 1. Residue glutamate 164 is part of the active site. Residue asparagine 200 is glycosylated (N-linked (GlcNAc...) asparagine). Intrachain disulfides connect cysteine 247-cysteine 269, cysteine 286-cysteine 305, and cysteine 329-cysteine 346. Residues 273-400 (YEPTVRIGGR…YLMRQGWRTG (128 aa)) form the Ricin B-type lectin 1 domain. The stretch at 283–325 (DGMCVDVYDDGYHNGNRIIAWKCKDRLEENQLWTLKSDLTIRS) is one 1-alpha repeat. A 1-beta repeat occupies 326–366 (NGKCLTTEGYAPGNYVMIYDCTSAVAEATYWEIWDNGTIIN). 2 N-linked (GlcNAc...) asparagine glycosylation sites follow: asparagine 361 and asparagine 401. One copy of the 1-gamma repeat lies at 369–401 (SALVLSAESSSMGGTLTVQTNEYLMRQGWRTGN). The Ricin B-type lectin 2 domain occupies 403–527 (TSPFVTSISG…GKPNQIWLTL (125 aa)). Residues 414–449 (SDLCMQAQGSNVWLADCDNNKKEQQWALYTDGSIRS) form a 2-alpha repeat. 2 disulfide bridges follow: cysteine 417/cysteine 430 and cysteine 456/cysteine 473. One copy of the 2-beta repeat lies at 453-492 (TNNCLTSKDHKQGSPIVLMACSNGWASQRWLFKNDGSIYS). The stretch at 495 to 528 (DDMVMDVKGSDPSLKQIILWPYTGKPNQIWLTLF) is one 2-gamma repeat.

This sequence in the N-terminal section; belongs to the ribosome-inactivating protein family. Type 2 RIP subfamily. In terms of assembly, disulfide-linked dimer of A and B chains.

The catalysed reaction is Endohydrolysis of the N-glycosidic bond at one specific adenosine on the 28S rRNA.. The A chain is responsible for inhibiting protein synthesis through the catalytic inactivation of 60S ribosomal subunits by removing adenine from position 4,324 of 28S rRNA. Functionally, the B chain is a galactose-specific lectin that facilitates the binding of abrin to the cell membrane that precedes endocytosis. This chain is Abrin-d, found in Abrus precatorius (Indian licorice).